Consider the following 185-residue polypeptide: Ubiquitin-conjugating enzyme E2 5 (185 aa).

The region spanning 1–148 is the UBC core domain; sequence MSSPSKRREM…VKEYCEKYAK (148 aa). Cysteine 85 (glycyl thioester intermediate) is an active-site residue. A disordered region spans residues 146–185; the sequence is YAKPRADTEEMSSDDEMSEDEYASDGDDEDDVAIAGKLDP. Over residues 154-177 the composition is skewed to acidic residues; sequence EEMSSDDEMSEDEYASDGDDEDDV.

It belongs to the ubiquitin-conjugating enzyme family. In terms of tissue distribution, expressed in developing ovules, but not in vascular tissues.

It catalyses the reaction S-ubiquitinyl-[E1 ubiquitin-activating enzyme]-L-cysteine + [E2 ubiquitin-conjugating enzyme]-L-cysteine = [E1 ubiquitin-activating enzyme]-L-cysteine + S-ubiquitinyl-[E2 ubiquitin-conjugating enzyme]-L-cysteine.. It functions in the pathway protein modification; protein ubiquitination. Functionally, accepts the ubiquitin from the E1 complex and catalyzes its covalent attachment to other proteins. This Arabidopsis thaliana (Mouse-ear cress) protein is Ubiquitin-conjugating enzyme E2 5 (UBC5).